The primary structure comprises 253 residues: MSPDTPRGGDLHPPEPDAAATAGPEGTPPDTEPAAEVIGVRHGMFGIRGTGDTSGYGRLVRPVTLPGGTAPPYGGWFDEVVDRLRTALENSGTPFGSALEKIVVFRGELTLHVRREHLVTVARLLRDDPALRFELCLGVNGVHYPDDAGRELHAVYPLRSITHNRLLRVETCAPDTDPHIPSLFEVYPTTDWHERETYDFFGILFDGHPSLTRITMPDDWRGHPQRKDYPLGGIPVEYKGARIPPPDERRAYS.

Disordered stretches follow at residues 1–33 (MSPDTPRGGDLHPPEPDAAATAGPEGTPPDTEP) and 234–253 (IPVEYKGARIPPPDERRAYS).

The protein belongs to the complex I 30 kDa subunit family. As to quaternary structure, NDH-1 is composed of 14 different subunits. Subunits NuoB, C, D, E, F, and G constitute the peripheral sector of the complex.

Its subcellular location is the cell membrane. The catalysed reaction is a quinone + NADH + 5 H(+)(in) = a quinol + NAD(+) + 4 H(+)(out). Its function is as follows. NDH-1 shuttles electrons from NADH, via FMN and iron-sulfur (Fe-S) centers, to quinones in the respiratory chain. The immediate electron acceptor for the enzyme in this species is believed to be a menaquinone. Couples the redox reaction to proton translocation (for every two electrons transferred, four hydrogen ions are translocated across the cytoplasmic membrane), and thus conserves the redox energy in a proton gradient. In Nocardia farcinica (strain IFM 10152), this protein is NADH-quinone oxidoreductase subunit C.